The sequence spans 332 residues: Ribosomal RNA small subunit methyltransferase C (332 aa).

It belongs to the methyltransferase superfamily. RsmC family. In terms of assembly, monomer.

Its subcellular location is the cytoplasm. The enzyme catalyses guanosine(1207) in 16S rRNA + S-adenosyl-L-methionine = N(2)-methylguanosine(1207) in 16S rRNA + S-adenosyl-L-homocysteine + H(+). Specifically methylates the guanine in position 1207 of 16S rRNA in the 30S particle. The polypeptide is Ribosomal RNA small subunit methyltransferase C (Pseudomonas paraeruginosa (strain DSM 24068 / PA7) (Pseudomonas aeruginosa (strain PA7))).